We begin with the raw amino-acid sequence, 1088 residues long: MGKYNLILSEYLSFIYNSQSAVQIPIYYSSNSELENRCIEFHSKCLENSKNGLSLRKLFVEYNDVIENATLLSILSYSYDKYNAVERKLVKYAKGKPLEADLTVNELDYENNKITSELFPTAEEYTDSLMDPAILTSLSSNLNAVMFWLEKHENDVAEKLKVYKRRLDLFTIVASTINKYGVPRHNAKYRYEYDVMKDKPYYLVTWANSSIEMLMSVFSHDDYLIAKELIVLSYSNRSTLAKLVSSPMSILVALVDINGTFITNEELELEFSNKYLRAIVPDQTFDELNQMLDNMRKAGLVDIPKMIQDWLVDRSIEKFPLMAKIYSWSFHVGFRKQKMLDACAGTLKTEYTENVDDEMYREYTMLIRDEVVKMLEEPVKHDDHLLRDSELAGLLSMSSASNGESRQLKFGRKTIFSTKKNMHVMDDMANERYTPGIIPPVNVDKPIPLGRRDVPGRRTRIIFILPYEYFIAQHAVVEKMLIYAKHTREYAEFYSQSNQLLSYGDVTRFLSNNTMVLYTDVSQWDSSQHNTQPFRKGIIMGLDILANMTNDAKVLQTLNLYKQTQINLMDSYVQIPDGNVIKKIQYGAVASGEKQTKAANSIANLALIKTVLSRISNKHSFATKIIRVDGDDNYAVLQFNTEVTKQMIQDVSNDVRETYARMNAKVKALVSTVGIEIAKRYIAGGKIFFRAGINLLNNEKRGQSTQWDQAAILYSNYIVNRLRGFETDREFILTKIMQMTSVAITGSLRLFPSERVLTTNSTFKVFDSEDFIIEYGTTDDEVYIQRAFMSLSSQKSGIADEIAASSTFKNYVTRLSEQLLFSKNNIVSRGIALTEKAKLNSYAPISLEKRRAQISALLTMLQKPVTFKSSKITINDILRDIKPFFTVSDAHLPIQYQKFMPTLPDNVQYIIQCIGSRTYQIEDDGSKSAISRLISKYSVYKPSIEELYKVISLHENEIQLYLISLGIPKIDADTYVGSKIYSQDKYRILESYVYNLLSINYGCYQLFDFNSPDLEKLIRIPFKGKIPAVTFILHLYAKLEVINYAIKNGSWISLFCNYPKSEMIKLWKKMWNITSLRSPYTNANFFQD.

Residues 501–687 (LSYGDVTRFL…AKRYIAGGKI (187 aa)) form the RdRp catalytic domain.

Belongs to the reoviridae RNA-directed RNA polymerase family. As to quaternary structure, interacts with VP3 (Potential). Interacts with VP2; this interaction activates VP1. Interacts with NSP5; this interaction is probably necessary for the formation of functional virus factories. Interacts with NSP2; this interaction is weak. The cofactor is Mg(2+).

Its subcellular location is the virion. The enzyme catalyses RNA(n) + a ribonucleoside 5'-triphosphate = RNA(n+1) + diphosphate. In terms of biological role, RNA-directed RNA polymerase that is involved in both transcription and genome replication. Together with VP3 capping enzyme, forms an enzyme complex positioned near the channels situated at each of the five-fold vertices of the core. Following infection, the outermost layer of the virus is lost, leaving a double-layered particle (DLP) made up of the core and VP6 shell. VP1 then catalyzes the transcription of fully conservative plus-strand genomic RNAs that are extruded through the DLP's channels into the cytoplasm where they function as mRNAs for translation of viral proteins. One copy of each of the viral (+)RNAs is also recruited during core assembly, together with newly synthesized polymerase complexes and VP2. The polymerase of these novo-formed particles catalyzes the synthesis of complementary minus-strands leading to dsRNA formation. To do so, the polymerase specifically recognizes and binds 4 bases 5'-UGUG-3' in the conserved 3'-sequence of plus-strand RNA templates. VP2 presumably activates the autoinhibited VP1-RNA complex to coordinate packaging and genome replication. Once dsRNA synthesis is complete, the polymerase switches to the transcriptional mode, thus providing secondary transcription. The protein is RNA-directed RNA polymerase of Rotavirus A (strain RVA/SA11-Both/G3P5B[2]) (RV-A).